Reading from the N-terminus, the 400-residue chain is NADH-quinone oxidoreductase subunit D (400 aa).

Belongs to the complex I 49 kDa subunit family. NDH-1 is composed of 14 different subunits. Subunits NuoB, C, D, E, F, and G constitute the peripheral sector of the complex.

The protein resides in the cell inner membrane. It catalyses the reaction a quinone + NADH + 5 H(+)(in) = a quinol + NAD(+) + 4 H(+)(out). Functionally, NDH-1 shuttles electrons from NADH, via FMN and iron-sulfur (Fe-S) centers, to quinones in the respiratory chain. The immediate electron acceptor for the enzyme in this species is believed to be menaquinone. Couples the redox reaction to proton translocation (for every two electrons transferred, four hydrogen ions are translocated across the cytoplasmic membrane), and thus conserves the redox energy in a proton gradient. The chain is NADH-quinone oxidoreductase subunit D from Prosthecochloris aestuarii (strain DSM 271 / SK 413).